The primary structure comprises 88 residues: Large ribosomal subunit protein bL27 (88 aa).

The segment at 1–23 is disordered; that stretch reads MAHKKGTGSTRNGRDSNAQRLGV. Positions 7 to 19 are enriched in polar residues; it reads TGSTRNGRDSNAQ.

Belongs to the bacterial ribosomal protein bL27 family.

This Synechococcus elongatus (strain ATCC 33912 / PCC 7942 / FACHB-805) (Anacystis nidulans R2) protein is Large ribosomal subunit protein bL27 (rpmA).